The sequence spans 462 residues: tRNA modification GTPase MnmE (462 aa).

3 residues coordinate (6S)-5-formyl-5,6,7,8-tetrahydrofolate: R27, E89, and R128. A TrmE-type G domain is found at 223-383 (GLKIAIVGRP…LEAAILAAVG (161 aa)). GTP contacts are provided by residues 233–238 (NVGKSS), 252–258 (TDLPGRT), and 277–280 (DTAG). Mg(2+)-binding residues include S237 and T258. K462 is a (6S)-5-formyl-5,6,7,8-tetrahydrofolate binding site.

It belongs to the TRAFAC class TrmE-Era-EngA-EngB-Septin-like GTPase superfamily. TrmE GTPase family. As to quaternary structure, homodimer. Heterotetramer of two MnmE and two MnmG subunits. K(+) is required as a cofactor.

It localises to the cytoplasm. Exhibits a very high intrinsic GTPase hydrolysis rate. Involved in the addition of a carboxymethylaminomethyl (cmnm) group at the wobble position (U34) of certain tRNAs, forming tRNA-cmnm(5)s(2)U34. The protein is tRNA modification GTPase MnmE of Synechococcus sp. (strain ATCC 27144 / PCC 6301 / SAUG 1402/1) (Anacystis nidulans).